A 207-amino-acid polypeptide reads, in one-letter code: Thymidylate kinase (207 aa).

Position 7–14 (7–14 (GCEGSGKS)) interacts with ATP.

It belongs to the thymidylate kinase family.

The enzyme catalyses dTMP + ATP = dTDP + ADP. Its function is as follows. Phosphorylation of dTMP to form dTDP in both de novo and salvage pathways of dTTP synthesis. The chain is Thymidylate kinase from Chlamydia caviae (strain ATCC VR-813 / DSM 19441 / 03DC25 / GPIC) (Chlamydophila caviae).